The following is a 195-amino-acid chain: Cysteine/O-acetylserine efflux protein (195 aa).

Residues 1–9 are Periplasmic-facing; sequence MTPILLSAF. A helical membrane pass occupies residues 10 to 32; the sequence is WTYTLITAMTPGPNNILALSSAT. Residues 33 to 46 are Cytoplasmic-facing; the sequence is SHGFRQSTRVLAGM. A helical membrane pass occupies residues 47-67; that stretch reads SLGFLIVMLLCAGISFSLAVI. Residues 68-69 are Periplasmic-facing; the sequence is DP. Residues 70 to 90 traverse the membrane as a helical segment; that stretch reads AAVHLLSWAGAAYIVWLAWKI. Topologically, residues 91-104 are cytoplasmic; that stretch reads ATSPTKEDGLQAKP. Residues 105 to 125 form a helical membrane-spanning segment; it reads ISFWASFALQFVNVKIILYGV. Residues 126-141 lie on the Periplasmic side of the membrane; that stretch reads TALSTFVLPQTQALSW. The helical transmembrane segment at 142–162 threads the bilayer; that stretch reads VVGVSVLLAMIGTFGNVCWAL. Residues 163–176 lie on the Cytoplasmic side of the membrane; sequence AGHLFQRLFRQYGR. A helical membrane pass occupies residues 177–194; that stretch reads QLNIVLALLLVYCAVRIF. Residue Y195 is a topological domain, periplasmic.

The protein belongs to the Rht family.

It is found in the cell inner membrane. It catalyses the reaction O-acetyl-L-serine(in) = O-acetyl-L-serine(out). It carries out the reaction L-cysteine(in) = L-cysteine(out). Its function is as follows. Exporter of O-acetylserine (OAS) and cysteine. This Shigella flexneri serotype 5b (strain 8401) protein is Cysteine/O-acetylserine efflux protein (eamB).